The chain runs to 141 residues: Putative nickel-responsive regulator (141 aa).

Residues His80, His91, His93, and Cys99 each contribute to the Ni(2+) site.

It belongs to the transcriptional regulatory CopG/NikR family. Homotetramer. Requires Ni(2+) as cofactor.

Transcriptional regulator. The chain is Putative nickel-responsive regulator from Methanocaldococcus jannaschii (strain ATCC 43067 / DSM 2661 / JAL-1 / JCM 10045 / NBRC 100440) (Methanococcus jannaschii).